The following is a 380-amino-acid chain: Cytochrome b (380 aa).

The next 4 helical transmembrane spans lie at 34-54 (FGSL…LLAT), 78-99 (WLIR…YLHI), 114-134 (WNTG…GYVL), and 179-199 (FFAL…IHLT). 2 residues coordinate heme b: His84 and His98. Positions 183 and 197 each coordinate heme b. Residue His202 coordinates a ubiquinone. Helical transmembrane passes span 227–247 (LKDI…ALFS), 289–309 (LGGV…PLLH), 321–341 (FSQF…WVGS), and 348–368 (FIII…LLFP).

Belongs to the cytochrome b family. In terms of assembly, the cytochrome bc1 complex contains 11 subunits: 3 respiratory subunits (MT-CYB, CYC1 and UQCRFS1), 2 core proteins (UQCRC1 and UQCRC2) and 6 low-molecular weight proteins (UQCRH/QCR6, UQCRB/QCR7, UQCRQ/QCR8, UQCR10/QCR9, UQCR11/QCR10 and a cleavage product of UQCRFS1). This cytochrome bc1 complex then forms a dimer. The cofactor is heme b.

It is found in the mitochondrion inner membrane. In terms of biological role, component of the ubiquinol-cytochrome c reductase complex (complex III or cytochrome b-c1 complex) that is part of the mitochondrial respiratory chain. The b-c1 complex mediates electron transfer from ubiquinol to cytochrome c. Contributes to the generation of a proton gradient across the mitochondrial membrane that is then used for ATP synthesis. The chain is Cytochrome b (MT-CYB) from Alca torda (Razorbill).